Here is a 359-residue protein sequence, read N- to C-terminus: Methionine import ATP-binding protein MetN (359 aa).

The disordered stretch occupies residues 1–21; it reads MSTPASTPAPDGSHQRDHHPG. Residues 24–264 enclose the ABC transporter domain; that stretch reads VEFRGVTKVF…PQTTVAQRFV (241 aa). 61–68 serves as a coordination point for ATP; that stretch reads GYSGAGKS.

Belongs to the ABC transporter superfamily. Methionine importer (TC 3.A.1.24) family. The complex is composed of two ATP-binding proteins (MetN), two transmembrane proteins (MetI) and a solute-binding protein (MetQ).

It is found in the cell membrane. It catalyses the reaction L-methionine(out) + ATP + H2O = L-methionine(in) + ADP + phosphate + H(+). The enzyme catalyses D-methionine(out) + ATP + H2O = D-methionine(in) + ADP + phosphate + H(+). Part of the ABC transporter complex MetNIQ involved in methionine import. Responsible for energy coupling to the transport system. The chain is Methionine import ATP-binding protein MetN from Corynebacterium efficiens (strain DSM 44549 / YS-314 / AJ 12310 / JCM 11189 / NBRC 100395).